The primary structure comprises 4841 residues: MDITGLSIMNAQASRQPGPHLLHQLVKPPNQNVALDYMGSNQRVNITYHQLHEAATSLASRITKTSGSAQGQFVVPLLIHQSPSLYISLLAILKAGGAFCPLNIDAPPERVKFILDDVAATVVLVSKELASAIPNGISAAVIIVDEEEDQSSTLQSLSTEVSSRVPGPEDLAYVMYTSGSTGTPKGVGISHDAATQALIAHDRHIPSFSRFLQFAAPTFDVSVFEIFFPFFRGATLVSVRRIEMLDDLPGVLRTMEVDACELTPTVAGSLLRTRSNAPELKVLLTIGEMLNAPVVEEFGGDENRPSMLWAMYGPTEATIHCTLQAEFSSDSSTGNIGVPLDTVSCFIIEVPDSDSEQSEIRVLPQGEVGELAVGGCQLATGYINRPEQTNSVFIDSPFGRIYRTGDKARLLPNGKLECFGRLSDGQVKLRGQRLELGEVEQAVLRTSGCHSAVAAVARSILVVFCAVDAGVTEDAVLKHCGDWLPQYMVPGEVVLMSEFPRLPSGKVDRKRLKAEYEEHKEAMLEDIADSEPVDEFESSLLVVVSRVMNFKVNKSTSLAAIGMDSLSAIKLASSLRNAGYSIDTTDLLTAKTVFDIIFAARRQIQNQTVSSLPFSTNLSLDFGQILQQNATLADMSGLIEEIIPCTPLQAAMLAETSHNSTAYCNQVELAIPLSYSAYQISESFAQLSQKNPILRTGFAIVDRRFVTLVYGELRPEQIKVVDQVQGDFSLSSPEDFCSPMRLQIQRDSVDEKSRVLLQIHHSLYDGWSMDVLLSDWSKLLLQEPVSEHSSFREVVKFYQQLQTSDDARMFWTENLAGWKQTPLPKLRDKLVHSGEVLSFRRPMSLSRRRVTAEVQRNGFSPQVLFQASLALLWTSVTGARDITIGSVTSGRTIPVIDIEQIIGPCIAALPVRIDFDKISIGLELLKNLHSSNRKIMQYCTVSLSEVKKLVGLQLGESLYDVLFVYQESLASSERTQCMVKEATHLDRLETPILFEVEPTEDGFTLQVTYHEAIVPPATVQHMVDQFEALAHSILERPTQEIKCALREIKCTPSVDNINASPPQRVPDLARLFEDVVRKHPEENALLFYHSLKVANNVVWSFRELNNEANQIAHYLQSCGIQVGQVVAVIMEKSPALYASILAIIKCGCGYLPILPSTPLARTREILLQAEIKYCLVDSSPDQLASMLELSTITVNTNLFNEFSTANLDNEVDGSRLAYVIYTSGTTGTPKGVAVQQQSIVANIEHLEATYPKPSSSQGRLLQACSQAFDVSVFEIFYTWCAGMCLCAGTNDTILEDIERSIRDLEITHLSMTPTVAALVEPSNVPSVQFLVTAGEPMTQAVHNKWCHQLWQGYGPSETTNICTVKKMATDDHIEHLGHVFPNTSAVVLSPATLDTVPLNWVGEFCFGGAQVAQGYLNMPELTAQKFIHHPQYGKLYRSGDMGRMLPDGSLVILGRIDDQVKLRGQRIEIGEINSTVTMAGFATSAATVLVEHEESTIKQLALFFVPQHDPTEFRVLEIDNEVQQSLAAHMQSRLPGYMVPSYLVPISSMPMTSSGKVDKRRLHDCFDKLDRHYLEKVSRSSGDNPDEGDWSRMDLVISEVIKESVAASAGGFGRWTPFTVLGVDSISAIDLARALNAKLGARVAVSDILRNPTIAQLAKHLEGKPLYEETAFEGTQREFFPAAFTAAIKEVFLGESKAIKDILPCTPLQEAMLSRGQRGYYNKVLLRLKAEPGAIRSYWEVMSKRHDILRTCFATTTDSKHAIAQVVLEDWEIPWRTFDISEPSFDGAIEEHLKSLPDPVDSRTPPVSLALLRYRGSAFLSFICHHALYDGVAMERLLKEVEALAGGEDLLPPVSYKEFLEISTNLPNDTEEFWQQHLRGYKALSIFTQSSSSEIDQSTCTTSLDMPLANLQGRLRDFGTTLLSVCQASWATVLAMTYRQPDVCFGNVMSGRTLDIDGLERLVAPCFNTIPIRVALPTTSSNIDMVKHLQKLNTEMLTYQFTPLRLIQRSINRTGKHIFDTLLLLQKPLQDIDQTVWELEADSGDMDIPLVCEVVPCPGLNSLVINLHRDMSIVTEDVASAMADAFKVILKAILTAPHSTPMTAEDLPDSLRSILQQLKPQYDKKDNTGNMPDGEEEWSEVELDVRQVLAKLSGVSEQQIKRRTTIFQLGLDSINAVQVASILRQRGFIVSASDVIECPSCSKIAAKLLENRSRTKSEDLKRYDIGRFSHQVYSEIAGRLPQTATIEAVLPCTPLQSAMLASFIQSGGENYLNAMEYIVTDEISLESLTKAWQLLHERHPMLRTGFVPVQHPDATFAMVRYAPGSMKTPVSIAESEGDEVSDLLNLKGNTSERVLTALHQPPWTVVLAQTPQQTSMKFVAHHVLYDAHALQMMLYDLSRLVKSERLPPVSRIEPAVSAILINSLDEQGSEKAFWEAKASSTVVNKFPLMTPLRVESRCMLADTTVASLSFTKLKRATQASNVTIQAVIQAAWTRVLASYLGENSVVFGVALSGRTTDETKDAPFPCLNTVPVVGNNVTSNAELVSYMMEYNQRLHKHQFSPLGKVQRWLGHPTGPVFDTLIAYQKMADAGSSSLPWKLVKDEARVEYSVSLEIEPTENDHVRLCITYYNDILPREQAHLLMKQFDSSLNHIACNHLATEDEAFNLSPDLYSVLPPSHPVLDAPVQFLHQFVELGAAVHPNKLALEFVSAFDGDTCLKKQWDYRQLNIMGNRVANMLQEKLTPGSIVAIHFDKCPEAYFSILGILKAGCSFVALDPSAPKARKQFIVEDSRAPCLLTRSLEDLDFEAKTAILEVKVESLSVLEEEELIFQPAISPSDTCYCLYTSGTTGTPKGCEITHDNAVQAMMAFQELFKGHWDADSRWLQFAALHFDVSVLEQYWSWSVGMAVVAAPKDLILDDLTASINKLEITHIDLTPSLARLTHPDEIPSLCRGVFITGGEQLKQEILDVWGPKAVIYNAYGPTEATIGVTMFQRVPVNGRPSNIGKQFPNVGSFIFKQNTNTPVLRGAVGELCVSGRLVGKGYLNRPQLTEERFPTLEEFGERVYRTGDLVRVLHDGCFDFLGRADDQVKLRGQRLEIAEINHIIRTDVTEVHDAATIVARHGTSGKDVLVSFIVSEHLTTGPLRVVSDDEGLATKAKEACRAKLPGYMVPTYILLLPYIPLSSNNKAEIKDLKKLFSELAPEQLMELSHAATAPVSRGAQDILVLLYDALAQFSNISKDDISPTTSIFDVGVDSITALKLASLLKSRGLHAVSPAMLLKNPVIGDLANCLAKAASSQRQKLAREIKQSIQAYAHRHRGLVYSSLNIGPADIEYIAPCSPLQEGIISRSLTSTKPGAYFNTFQLKLHQSTTTTKFQQAWKDLVFSESILRTVFVPSTDGFLQVALRNPLFPWESTAFGSNELAEYYFAEQKENWIQRNKSSITQPLLLTYVETPTSRLFTVHIFHALYDGNSFDLMMDRVAANYAGTSVQKAPSFFEALTSGPLTRHDNCKGFWEKHLEGWVPSSITAHERSTHGSVVVAERDMPISNFEAMRSSHNVTLQAVIMALWTSVLQNLVESQITIGVVVSGRAVDLPGVENTIGPLFNTVPFFRQAVQHEDWKSLVRRCHDFNASVLDFQHVPLKNIQKWCSHNKALFDTLFTYQIDEAKTDDNELPFEIQNSEVTPDYPLALEAVYTKTGKLRFTLVAQGHVVSQSILDNLLNEIERFADLAAESPQSEVPVPQFKIPIVDDFHSGNAEKDSQNSFEWTSEAQAIQNEISVLVGINPAEIAQDVSILELGLDSIDVIKLAAKLKRKSINLAPSQIMRQQTIAKMITELASITNDSSCPPRDNFLSRIGYRLREHLEASEVDISNVESVLPPTHLQESMVAGMIHSGFEAYFNHDVLRVSDHVDTTQLIQAWKDLIHQTPVLRTGFYQVESQDFDMTFCQVVSKSIDIDFEATRVEDLSELHQITDAAKSAAKNGRGQKKLFQLKLVVIGQERYMVLSIAHALYDGWSLSLLFQDLQALLEGRLITRPPVEQFIARVMESTTSKAKDFWMQYLQDAPSSTILTKVQLPTVEEKVQRFESVSKVSLLEIDAACKRLSVSLQVLCQACWAVTLARQIRSTDVTFGTVLSGRDFDGADSLVFPTMNTVALRCILHGSAAEFLRYLEENMTDIRDFQHYPLRKAQSAAKVDGQDLFNTLFILQRSPVSSDPADRPLLTSVEASSSTEYPLCVEAEAVSDSLVWRLALQPQCSWNGGPQSLLETLDNVMSFLLKSKDPEILSFSERGVSICGTPPVALPESIIHEDASDNYSSRDEKIEWNQNEIGIREVLFQVSNVPILSIKLSDNLYHLGLDSISAIKVSSLLRKAGINLRPQDLIKSSSISEMAQKADTKLKKPLQTLETVEDWLPPADIDVNKLLADNGINKDEAEVLPALPMQVYMLTAWENSDGSVFFPEFPCRIKTSASLGEIDQAWGKLVSETPLLRTCFASTQSSTIPFIQIILKELGIPLSSLQPGERSNCCIRPLVEVNIEQEDKDTWLLRLKLHHALYDGVSLPALLQRLSELLNGSGTMENKGLSQWKQFTMRHTTDEARIARREFWTSYLKGSSSSPIIANSDTDVKMRTSHLNRSAISDISSIQALATQSGVSFQSLFLSAYARALAKQNNVSDTVFGLYLANRAAGENLPQTYPTLNLVPLRVSSPINRPLAAVAADIQRDIHLITSESRAEVGLWEIAQWTGIRITSFVNFLTLPGDTDPTGNSITVLPETNTGVVVKDNLPDRPRTPYLESIFRNDIPMAIDIEASVDGKNLAIGVFGSLQQISSEEALTLVANIAEILDGGI.

Residues 26 to 429 form an adenylation 1 region; it reads VKPPNQNVAL…GRLSDGQVKL (404 aa). Residues 531–604 enclose the Carrier 1 domain; sequence EPVDEFESSL…DIIFAARRQI (74 aa). An O-(pantetheine 4'-phosphoryl)serine modification is found at serine 565. The segment at 640-1042 is condensation 1; sequence EEIIPCTPLQ…ILERPTQEIK (403 aa). Residues 1072–1463 are adenylation 2; it reads FEDVVRKHPE…GRIDDQVKLR (392 aa). Positions 1587–1665 constitute a Carrier 2 domain; sequence EGDWSRMDLV…QLAKHLEGKP (79 aa). Residue serine 1625 is modified to O-(pantetheine 4'-phosphoryl)serine. Positions 1702–2043 are condensation 2; that stretch reads ILPCTPLQEA…QTVWELEADS (342 aa). The region spanning 2139–2212 is the Carrier 3 domain; that stretch reads SEVELDVRQV…KIAAKLLENR (74 aa). Serine 2173 carries the O-(pantetheine 4'-phosphoryl)serine modification. The tract at residues 2248 to 2663 is condensation 3; it reads AVLPCTPLQS…NHLATEDEAF (416 aa). Residues 2695-3090 form an adenylation 3 region; the sequence is AAVHPNKLAL…GRADDQVKLR (396 aa). In terms of domain architecture, Carrier 4 spans 3219–3293; the sequence is QDILVLLYDA…DLANCLAKAA (75 aa). O-(pantetheine 4'-phosphoryl)serine is present on serine 3253. A condensation 4 region spans residues 3333–3735; the sequence is IAPCSPLQEG…DLAAESPQSE (403 aa). Residues 3759-3838 enclose the Carrier 5 domain; that stretch reads QNSFEWTSEA…KMITELASIT (80 aa). O-(pantetheine 4'-phosphoryl)serine is present on serine 3799. Residues 3873-4242 form a condensation 5 region; sequence SVLPPTHLQE…VEAEAVSDSL (370 aa). Positions 4318–4394 constitute a Carrier 6 domain; it reads IEWNQNEIGI…EMAQKADTKL (77 aa). O-(pantetheine 4'-phosphoryl)serine is present on serine 4355. A condensation 6 region spans residues 4430 to 4726; it reads EVLPALPMQV…DIHLITSESR (297 aa).

Belongs to the NRP synthetase family.

Its pathway is siderophore biosynthesis. Nonribosomal peptide synthetase; part of the gene cluster that mediates the biosynthesis of hydroxamate-containing siderophores that play a critical role in virulence. Gibberella zeae produces extracellular coprogen-type siderophores as well as the intracellular siderophore ferricrocin. The role of extracellular siderophores is to supply iron to the fungus during plant infection, and the intracellular ferricrocin is required for intracellular iron distribution and storage with a crucial role in ascus and ascospore development. SID1 catalyzes the conversion of L-ornithine to N(5)-hydroxyornithine, the first step in the biosynthesis of all hydroxamate-containing siderophores. The assembly of extracellular coprogen-type siderophores is performed by the nonribosomal peptide synthetase (NRPS) NPS6 whereas the intracellular siderophore ferricrocin is assembled by NPS2. The chain is Nonribosomal peptide synthetase 2 from Gibberella zeae (strain ATCC MYA-4620 / CBS 123657 / FGSC 9075 / NRRL 31084 / PH-1) (Wheat head blight fungus).